The following is a 914-amino-acid chain: High affinity cAMP-specific and IBMX-insensitive 3',5'-cyclic phosphodiesterase 8 (914 aa).

Disordered regions lie at residues 1–27 (MGCS…PLDA) and 113–138 (RRAT…HRKS). Positions 116-129 (TGSTGTSGTSSSGG) are enriched in low complexity. Residues 312-359 (TQQALYTALHRLKEVVLITDDLLRIQYANRATERLLNMRLDEIISKQL) form the PAS domain. The PDEase domain maps to 558 to 893 (TAAIVPAKMK…SQWKKYDEQG (336 aa)). His-640 functions as the Proton donor in the catalytic mechanism. A divalent metal cation contacts are provided by His-644, His-682, Asp-683, and Asp-799.

It belongs to the cyclic nucleotide phosphodiesterase family. PDE8 subfamily. A divalent metal cation is required as a cofactor. As to expression, expressed in Malpighian tubules and head.

It catalyses the reaction 3',5'-cyclic AMP + H2O = AMP + H(+). It participates in purine metabolism; 3',5'-cyclic AMP degradation; AMP from 3',5'-cyclic AMP: step 1/1. In terms of biological role, hydrolyzes the second messenger cAMP, which is a key regulator of many important physiological processes. Involved in the positive regulation of MAP kinase signaling and in inhibiting oxidative stress-induced cell death. The polypeptide is High affinity cAMP-specific and IBMX-insensitive 3',5'-cyclic phosphodiesterase 8 (Drosophila melanogaster (Fruit fly)).